Here is a 385-residue protein sequence, read N- to C-terminus: DNA replication and repair protein RecF (385 aa).

Position 30–37 (30–37 (GSNGFGKT)) interacts with ATP.

The protein belongs to the RecF family.

The protein resides in the cytoplasm. The RecF protein is involved in DNA metabolism; it is required for DNA replication and normal SOS inducibility. RecF binds preferentially to single-stranded, linear DNA. It also seems to bind ATP. This is DNA replication and repair protein RecF from Mycobacterium avium (strain 104).